A 95-amino-acid chain; its full sequence is Glutamyl-tRNA(Gln) amidotransferase subunit C (95 aa).

Belongs to the GatC family. In terms of assembly, heterotrimer of A, B and C subunits.

It catalyses the reaction L-glutamyl-tRNA(Gln) + L-glutamine + ATP + H2O = L-glutaminyl-tRNA(Gln) + L-glutamate + ADP + phosphate + H(+). The catalysed reaction is L-aspartyl-tRNA(Asn) + L-glutamine + ATP + H2O = L-asparaginyl-tRNA(Asn) + L-glutamate + ADP + phosphate + 2 H(+). In terms of biological role, allows the formation of correctly charged Asn-tRNA(Asn) or Gln-tRNA(Gln) through the transamidation of misacylated Asp-tRNA(Asn) or Glu-tRNA(Gln) in organisms which lack either or both of asparaginyl-tRNA or glutaminyl-tRNA synthetases. The reaction takes place in the presence of glutamine and ATP through an activated phospho-Asp-tRNA(Asn) or phospho-Glu-tRNA(Gln). This is Glutamyl-tRNA(Gln) amidotransferase subunit C from Caulobacter vibrioides (strain ATCC 19089 / CIP 103742 / CB 15) (Caulobacter crescentus).